Consider the following 286-residue polypeptide: Alpha-ketoglutarate-dependent dioxygenase alkB homolog 3 (286 aa).

A disordered region spans residues 1–46; it reads MEDKRQRARVQGGWATPTKSQSATQPASPARSRLSQTAGPAWRSKE. A compositionally biased stretch (polar residues) spans 17-38; it reads PTKSQSATQPASPARSRLSQTA. Substrate is bound by residues Trp115 and 141 to 143; that span reads YTY. Positions 172 to 278 constitute a Fe2OG dioxygenase domain; that stretch reads TFNSLLCNFY…RVNLTFRTVY (107 aa). Leu177 is subject to (4R)-5-hydroxyleucine; alternate. Leu177 carries the (4R)-5-oxoleucine; alternate modification. A 2-oxoglutarate-binding site is contributed by 179-181; it reads NFY. Positions 191 and 193 each coordinate Fe cation. Residue Asp194 participates in substrate binding. Residue His257 coordinates Fe cation. 2-oxoglutarate contacts are provided by residues 269 to 275 and Arg275; that span reads RVNLTFR.

It belongs to the alkB family. In terms of assembly, interacts with the ASCC complex composed of ASCC1, ASCC2 and ASCC3. Interacts directly with ASCC3, and is thereby recruited to the ASCC complex. Interacts with OTUD4; the interaction is direct. Interacts with USP7 and USP9X. The cofactor is Fe(2+). In terms of processing, ubiquitinated; undergoes 'Lys-48'-linked polyubiquitination. OTUD4 promotes USP7 and USP9X-dependent deubiquitination of 'Lys-48'-polyubiquitinated ALKBH3 promoting the repair of alkylated DNA lesions. In terms of tissue distribution, detected in testis, kidney, liver and heart.

The protein localises to the nucleus. It localises to the cytoplasm. It catalyses the reaction an N(1)-methyladenosine in mRNA + 2-oxoglutarate + O2 = an adenosine in mRNA + formaldehyde + succinate + CO2. The enzyme catalyses a methylated nucleobase within DNA + 2-oxoglutarate + O2 = a nucleobase within DNA + formaldehyde + succinate + CO2. The catalysed reaction is an N(1)-methyl-2'-deoxyadenosine in single-stranded DNA + 2-oxoglutarate + O2 = a 2'-deoxyadenosine in single-stranded DNA + formaldehyde + succinate + CO2 + H(+). It carries out the reaction an N(3)-methyl-2'-deoxycytidine in single-stranded DNA + 2-oxoglutarate + O2 = a 2'-deoxycytidine in single-stranded DNA + formaldehyde + succinate + CO2 + H(+). It catalyses the reaction a 3,N(4)-etheno-2'-deoxycytidine in single-stranded DNA + 2-oxoglutarate + O2 + H2O = a 2'-deoxycytidine in single-stranded DNA + glyoxal + succinate + CO2. Its activity is regulated as follows. Activated by ascorbate. Dioxygenase that mediates demethylation of DNA and RNA containing 1-methyladenosine (m1A). Repairs alkylated DNA containing 1-methyladenosine (m1A) and 3-methylcytosine (m3C) by oxidative demethylation. Has a strong preference for single-stranded DNA. Able to process alkylated m3C within double-stranded regions via its interaction with ASCC3, which promotes DNA unwinding to generate single-stranded substrate needed for ALKBH3. Can repair exocyclic 3,N4-ethenocytosine adducs in single-stranded DNA. Also acts on RNA. Demethylates N(1)-methyladenosine (m1A) RNA, an epigenetic internal modification of messenger RNAs (mRNAs) highly enriched within 5'-untranslated regions (UTRs) and in the vicinity of start codons. Requires molecular oxygen, alpha-ketoglutarate and iron. This is Alpha-ketoglutarate-dependent dioxygenase alkB homolog 3 from Mus musculus (Mouse).